Reading from the N-terminus, the 334-residue chain is N-acetyl-gamma-glutamyl-phosphate reductase (334 aa).

Cys154 is an active-site residue.

The protein belongs to the NAGSA dehydrogenase family. Type 1 subfamily.

The protein localises to the cytoplasm. The enzyme catalyses N-acetyl-L-glutamate 5-semialdehyde + phosphate + NADP(+) = N-acetyl-L-glutamyl 5-phosphate + NADPH + H(+). It functions in the pathway amino-acid biosynthesis; L-arginine biosynthesis; N(2)-acetyl-L-ornithine from L-glutamate: step 3/4. In terms of biological role, catalyzes the NADPH-dependent reduction of N-acetyl-5-glutamyl phosphate to yield N-acetyl-L-glutamate 5-semialdehyde. In Yersinia pestis, this protein is N-acetyl-gamma-glutamyl-phosphate reductase.